The chain runs to 203 residues: Dual-action ribosomal maturation protein DarP (203 aa).

Disordered regions lie at residues 1–31 and 178–203; these read MTRK…SQLK and NADG…DRDA. A compositionally biased stretch (basic and acidic residues) spans 21 to 31; it reads GYDRPSKSQLK. The span at 188 to 203 shows a compositional bias: acidic residues; sequence SEADDAQDDEDDDRDA.

This sequence belongs to the DarP family.

It localises to the cytoplasm. Member of a network of 50S ribosomal subunit biogenesis factors which assembles along the 30S-50S interface, preventing incorrect 23S rRNA structures from forming. Promotes peptidyl transferase center (PTC) maturation. The protein is Dual-action ribosomal maturation protein DarP of Paraburkholderia xenovorans (strain LB400).